Reading from the N-terminus, the 255-residue chain is ATP synthase subunit a (255 aa).

Positions 1 to 7 are cleaved as a propeptide — removed in mature form; that stretch reads MMFNNII. Transmembrane regions (helical) follow at residues 35–55, 91–111, 120–140, 147–167, 177–197, and 208–228; these read FGFY…LITY, YFPF…LGLI, HFIL…ILGF, FFSL…LVLI, VSLG…LVIL, and GIFY…FSGL.

Belongs to the ATPase A chain family. In terms of assembly, F-type ATPases have 2 components, CF(1) - the catalytic core - and CF(0) - the membrane proton channel. CF(1) has five subunits: alpha(3), beta(3), gamma(1), delta(1), epsilon(1). CF(0) has three main subunits: a, b and c.

The protein resides in the mitochondrion inner membrane. In terms of biological role, mitochondrial membrane ATP synthase (F(1)F(0) ATP synthase or Complex V) produces ATP from ADP in the presence of a proton gradient across the membrane which is generated by electron transport complexes of the respiratory chain. F-type ATPases consist of two structural domains, F(1) - containing the extramembraneous catalytic core and F(0) - containing the membrane proton channel, linked together by a central stalk and a peripheral stalk. During catalysis, ATP synthesis in the catalytic domain of F(1) is coupled via a rotary mechanism of the central stalk subunits to proton translocation. Key component of the proton channel; it may play a direct role in the translocation of protons across the membrane. The protein is ATP synthase subunit a (ATP6) of Trichophyton rubrum (Athlete's foot fungus).